The following is a 581-amino-acid chain: DNA primase (581 aa).

A CHC2-type zinc finger spans residues 40–64 (CPFHNEKTPSFTVNGEKQFYHCFGC). A Toprim domain is found at 259–341 (NRLLVVEGYM…GRQLRFMFLP (83 aa)). Glu265, Asp309, and Asp311 together coordinate Mg(2+).

This sequence belongs to the DnaG primase family. As to quaternary structure, monomer. Interacts with DnaB. The cofactor is Zn(2+). Requires Mg(2+) as cofactor.

It catalyses the reaction ssDNA + n NTP = ssDNA/pppN(pN)n-1 hybrid + (n-1) diphosphate.. Its function is as follows. RNA polymerase that catalyzes the synthesis of short RNA molecules used as primers for DNA polymerase during DNA replication. In Escherichia coli O6:H1 (strain CFT073 / ATCC 700928 / UPEC), this protein is DNA primase.